The primary structure comprises 628 residues: Patulin synthase (628 aa).

The signal sequence occupies residues M1 to A20. N48 carries N-linked (GlcNAc...) asparagine glycosylation. FAD-binding positions include T60–A61 and E81–A82. An N-linked (GlcNAc...) asparagine glycan is attached at N92. N147 to A150 contributes to the FAD binding site. Residues N197, N260, N386, N429, and N486 are each glycosylated (N-linked (GlcNAc...) asparagine). H564 (proton acceptor) is an active-site residue. Residues A598 and P609 to Q610 contribute to the FAD site.

It belongs to the GMC oxidoreductase family. In terms of assembly, homodimer. It depends on FAD as a cofactor.

Its subcellular location is the cytoplasm. The protein resides in the cell cortex. It localises to the vacuole. The protein localises to the secreted. It is found in the cell wall. It carries out the reaction (E)-ascladiol + A = patulin + AH2. It participates in mycotoxin biosynthesis; patulin biosynthesis. Functionally, patulin synthase; part of the gene cluster that mediates the biosynthesis of patulin, an acetate-derived tetraketide mycotoxin produced by several fungal species that shows antimicrobial properties against several bacteria. PatE catalyzes the last step of the pathway which is the conversion of E-ascladiol to patulin. The pathway begins with the synthesis of 6-methylsalicylic acid by the polyketide synthase (PKS) patK via condensation of acetate and malonate units. The 6-methylsalicylic acid decarboxylase patG then catalyzes the decarboxylation of 6-methylsalicylic acid to yield m-cresol (also known as 3-methylphenol). These first reactions occur in the cytosol. The intermediate m-cresol is then transported into the endoplasmic reticulum where the cytochrome P450 monooxygenase patH converts it to m-hydroxybenzyl alcohol, which is further converted to gentisyl alcohol by the cytochrome P450 monooxygenase patI. The oxidoreductases patJ and patO further convert gentisyl alcohol to isoepoxydon in the vacuole. PatN catalyzes then the transformation of isoepoxydon into phyllostine. The cluster protein patF is responsible for the conversion from phyllostine to neopatulin whereas the alcohol dehydrogenase patD converts neopatulin to E-ascladiol. The steps between isoepoxydon and E-ascladiol occur in the cytosol, and E-ascladiol is probably secreted to the extracellular space by one of the cluster-specific transporters patC or patM. Finally, the secreted patulin synthase patE catalyzes the conversion of E-ascladiol to patulin. The protein is Patulin synthase of Aspergillus clavatus (strain ATCC 1007 / CBS 513.65 / DSM 816 / NCTC 3887 / NRRL 1 / QM 1276 / 107).